The primary structure comprises 506 residues: Maturase K (506 aa).

It belongs to the intron maturase 2 family. MatK subfamily.

It localises to the plastid. It is found in the chloroplast. In terms of biological role, usually encoded in the trnK tRNA gene intron. Probably assists in splicing its own and other chloroplast group II introns. In Pisum sativum (Garden pea), this protein is Maturase K.